The sequence spans 243 residues: Carboxy-S-adenosyl-L-methionine synthase (243 aa).

S-adenosyl-L-methionine contacts are provided by residues Tyr39, 64–66 (GCS), Asn132, and Arg199.

It belongs to the class I-like SAM-binding methyltransferase superfamily. Cx-SAM synthase family. Homodimer.

The enzyme catalyses prephenate + S-adenosyl-L-methionine = carboxy-S-adenosyl-L-methionine + 3-phenylpyruvate + H2O. In terms of biological role, catalyzes the conversion of S-adenosyl-L-methionine (SAM) to carboxy-S-adenosyl-L-methionine (Cx-SAM). This Alteromonas mediterranea (strain DSM 17117 / CIP 110805 / LMG 28347 / Deep ecotype) protein is Carboxy-S-adenosyl-L-methionine synthase.